The sequence spans 299 residues: MATH domain and coiled-coil domain-containing protein At2g42460 (299 aa).

One can recognise an MATH domain in the interval 7 to 130 (QKTFTWKIEN…NNTLFIEVYI (124 aa)). The stretch at 225–262 (FRVKWLKSKLDEISLARKKKVDADAARVQELEGKVKNQ) forms a coiled coil.

The polypeptide is MATH domain and coiled-coil domain-containing protein At2g42460 (Arabidopsis thaliana (Mouse-ear cress)).